The chain runs to 355 residues: Histidinol-phosphate aminotransferase (355 aa).

Lys-218 carries the post-translational modification N6-(pyridoxal phosphate)lysine.

The protein belongs to the class-II pyridoxal-phosphate-dependent aminotransferase family. Histidinol-phosphate aminotransferase subfamily. Homodimer. Requires pyridoxal 5'-phosphate as cofactor.

The enzyme catalyses L-histidinol phosphate + 2-oxoglutarate = 3-(imidazol-4-yl)-2-oxopropyl phosphate + L-glutamate. The protein operates within amino-acid biosynthesis; L-histidine biosynthesis; L-histidine from 5-phospho-alpha-D-ribose 1-diphosphate: step 7/9. The protein is Histidinol-phosphate aminotransferase of Pelodictyon phaeoclathratiforme (strain DSM 5477 / BU-1).